Consider the following 137-residue polypeptide: Large ribosomal subunit protein uL14 (137 aa).

This sequence belongs to the universal ribosomal protein uL14 family. Component of the large ribosomal subunit. Mature ribosomes consist of a small (40S) and a large (60S) subunit. The 40S subunit contains about 32 different proteins and 1 molecule of RNA (18S). The 60S subunit contains 45 different proteins and 3 molecules of RNA (25S, 5.8S and 5S).

Its subcellular location is the cytoplasm. Component of the ribosome, a large ribonucleoprotein complex responsible for the synthesis of proteins in the cell. The small ribosomal subunit (SSU) binds messenger RNAs (mRNAs) and translates the encoded message by selecting cognate aminoacyl-transfer RNA (tRNA) molecules. The large subunit (LSU) contains the ribosomal catalytic site termed the peptidyl transferase center (PTC), which catalyzes the formation of peptide bonds, thereby polymerizing the amino acids delivered by tRNAs into a polypeptide chain. The nascent polypeptides leave the ribosome through a tunnel in the LSU and interact with protein factors that function in enzymatic processing, targeting, and the membrane insertion of nascent chains at the exit of the ribosomal tunnel. The polypeptide is Large ribosomal subunit protein uL14 (Candida albicans (strain SC5314 / ATCC MYA-2876) (Yeast)).